Reading from the N-terminus, the 204-residue chain is Large ribosomal subunit protein eL15 (204 aa).

Over residues 172–182 (RGLRGRGHLHN) the composition is skewed to basic residues. The disordered stretch occupies residues 172 to 204 (RGLRGRGHLHNKAPPSRRANWKRNQTLSLPRYR). A compositionally biased stretch (polar residues) spans 193 to 204 (KRNQTLSLPRYR).

The protein belongs to the eukaryotic ribosomal protein eL15 family.

This chain is Large ribosomal subunit protein eL15 (RPL15), found in Petunia hybrida (Petunia).